Here is a 225-residue protein sequence, read N- to C-terminus: Imidazole glycerol phosphate synthase subunit HisH (225 aa).

Residues 3 to 225 form the Glutamine amidotransferase type-1 domain; it reads TIAIVDYGMG…LYRNFVDWQP (223 aa). Residue Cys82 is the Nucleophile of the active site. Active-site residues include His205 and Glu207.

As to quaternary structure, heterodimer of HisH and HisF.

It localises to the cytoplasm. The catalysed reaction is 5-[(5-phospho-1-deoxy-D-ribulos-1-ylimino)methylamino]-1-(5-phospho-beta-D-ribosyl)imidazole-4-carboxamide + L-glutamine = D-erythro-1-(imidazol-4-yl)glycerol 3-phosphate + 5-amino-1-(5-phospho-beta-D-ribosyl)imidazole-4-carboxamide + L-glutamate + H(+). The enzyme catalyses L-glutamine + H2O = L-glutamate + NH4(+). Its pathway is amino-acid biosynthesis; L-histidine biosynthesis; L-histidine from 5-phospho-alpha-D-ribose 1-diphosphate: step 5/9. IGPS catalyzes the conversion of PRFAR and glutamine to IGP, AICAR and glutamate. The HisH subunit catalyzes the hydrolysis of glutamine to glutamate and ammonia as part of the synthesis of IGP and AICAR. The resulting ammonia molecule is channeled to the active site of HisF. The protein is Imidazole glycerol phosphate synthase subunit HisH of Bordetella pertussis (strain Tohama I / ATCC BAA-589 / NCTC 13251).